The sequence spans 235 residues: Adenosine 5'-phosphosulfate reductase (235 aa).

Residues Cys121, Cys122, Cys204, and Cys207 each coordinate [4Fe-4S] cluster. The active-site Nucleophile; cysteine thiosulfonate intermediate is Cys230.

It belongs to the PAPS reductase family. CysH subfamily. The cofactor is [4Fe-4S] cluster.

The protein localises to the cytoplasm. The catalysed reaction is [thioredoxin]-disulfide + sulfite + AMP + 2 H(+) = adenosine 5'-phosphosulfate + [thioredoxin]-dithiol. It participates in sulfur metabolism; hydrogen sulfide biosynthesis; sulfite from sulfate. Catalyzes the formation of sulfite from adenosine 5'-phosphosulfate (APS) using thioredoxin as an electron donor. In Geobacillus kaustophilus (strain HTA426), this protein is Adenosine 5'-phosphosulfate reductase.